The primary structure comprises 158 residues: uncharacterized protein (158 aa).

The protein localises to the mitochondrion. This is an uncharacterized protein from Arabidopsis thaliana (Mouse-ear cress).